The primary structure comprises 219 residues: Orotate phosphoribosyltransferase (219 aa).

Position 26 (Lys26) interacts with 5-phospho-alpha-D-ribose 1-diphosphate. Orotate is bound at residue 34–35 (FF). 5-phospho-alpha-D-ribose 1-diphosphate-binding positions include 72–73 (YK), Arg98, Lys99, Lys102, His104, and 124–132 (DDVITAGTA). 2 residues coordinate orotate: Thr128 and Arg156.

This sequence belongs to the purine/pyrimidine phosphoribosyltransferase family. PyrE subfamily. Homodimer. The cofactor is Mg(2+).

The catalysed reaction is orotidine 5'-phosphate + diphosphate = orotate + 5-phospho-alpha-D-ribose 1-diphosphate. Its pathway is pyrimidine metabolism; UMP biosynthesis via de novo pathway; UMP from orotate: step 1/2. Functionally, catalyzes the transfer of a ribosyl phosphate group from 5-phosphoribose 1-diphosphate to orotate, leading to the formation of orotidine monophosphate (OMP). This is Orotate phosphoribosyltransferase from Xylella fastidiosa (strain Temecula1 / ATCC 700964).